A 1358-amino-acid polypeptide reads, in one-letter code: Tenascin-R (1358 aa).

The first 31 residues, 1-31, serve as a signal peptide directing secretion; sequence MGIDGETVVLKNMLIGVNLILLGSMLKPSEC. Residues 37-58 form a disordered region; it reads TERAQRQTVEEEGGASSYNTSS. Asparagine 55 carries an N-linked (GlcNAc...) asparagine glycan. The stretch at 127-157 forms a coiled coil; sequence CASSSQVLQELLSRIEMLEREVSLLRDQCNT. O-linked (Xyl...) (chondroitin sulfate) serine glycosylation is present at serine 176. Asparagine 180 and asparagine 198 each carry an N-linked (GlcNAc...) asparagine glycan. EGF-like domains lie at 188–199, 219–230, and 250–261; these read CICNEGWFGKNC, CICDSEYSGDDC, and CVCEEPYTGEDC. O-linked (Xyl...) (chondroitin sulfate) serine glycosylation is present at serine 271. Asparagine 278 carries an N-linked (GlcNAc...) asparagine glycan. The region spanning 281–292 is the EGF-like 4 domain; the sequence is CLCQEGYAGEDC. Intrachain disulfides connect cysteine 297-cysteine 307 and cysteine 314-cysteine 323. An O-linked (Xyl...) (chondroitin sulfate) serine glycan is attached at serine 302. The EGF-like 5 domain maps to 312–323; that stretch reads CICEEGYQGPDC. Fibronectin type-III domains are found at residues 328–420, 421–505, 506–597, 598–687, 688–777, 778–865, 866–955, 956–1042, and 1043–1131; these read PPED…TPQG, LQFK…TVID, GPTQ…IDAP, KNLR…TELD, SPRD…FRPI, SHLH…TGID, PPKN…AMDS, PMDL…TLLD, and PPDN…GGRV. 3 N-linked (GlcNAc...) asparagine glycosylation sites follow: asparagine 392, asparagine 470, and asparagine 581. Position 724 is a phosphoserine (serine 724). N-linked (GlcNAc...) asparagine glycans are attached at residues asparagine 791, asparagine 869, asparagine 874, asparagine 1036, asparagine 1046, and asparagine 1261. The region spanning 1129–1344 is the Fibrinogen C-terminal domain; sequence GRVFSHPQDC…FVEMKMRPYI (216 aa).

The protein belongs to the tenascin family. As to quaternary structure, interacts with BCAN and ACAN in a calcium-dependent manner. Interacts with SCN2B, PTPRZ1, and CSPG3. Forms oligomers. Isoforms 1 and 2 form respectively trimeric (tribrachion) and dimeric kink-armed rodlike structures, which are linked by disulfide bridges. Interacts with CNTN1, TNC and FN1. In terms of processing, contains N-linked oligosaccharides with a sulfated carbohydrate structures. Contains N-linked oligosaccharides, O-linked sialylated structures and O-linked chondroitin sulfate glycosaminoglycans. In terms of tissue distribution, brain-specific.

The protein resides in the secreted. The protein localises to the extracellular space. Its subcellular location is the extracellular matrix. In terms of biological role, neural extracellular matrix (ECM) protein involved in interactions with different cells and matrix components. Theses interactions can influence cellular behavior by either evoking a stable adhesion and differentiation, or repulsion and inhibition of neurite growth. Binding to cell surface gangliosides inhibits RGD-dependent integrin-mediated cell adhesion and results in an inhibition of PTK2/FAK1 (FAK) phosphorylation and cell detachment. Binding to membrane surface sulfatides results in a oligodendrocyte adhesion and differentiation. Interaction with CNTN1 induces a repulsion of neurons and an inhibition of neurite outgrowth. Interacts with SCN2B may play a crucial role in clustering and regulation of activity of sodium channels at nodes of Ranvier. TNR-linked chondroitin sulfate glycosaminoglycans are involved in the interaction with FN1 and mediates inhibition of cell adhesion and neurite outgrowth. The highly regulated addition of sulfated carbohydrate structure may modulate the adhesive properties of TNR over the course of development and during synapse maintenance. This is Tenascin-R (Tnr) from Mus musculus (Mouse).